We begin with the raw amino-acid sequence, 189 residues long: ATP-dependent protease subunit HslV (189 aa).

Threonine 12 is a catalytic residue. Residues serine 172, cysteine 175, and threonine 178 each contribute to the Na(+) site.

It belongs to the peptidase T1B family. HslV subfamily. As to quaternary structure, a double ring-shaped homohexamer of HslV is capped on each side by a ring-shaped HslU homohexamer. The assembly of the HslU/HslV complex is dependent on binding of ATP.

It localises to the cytoplasm. The enzyme catalyses ATP-dependent cleavage of peptide bonds with broad specificity.. With respect to regulation, allosterically activated by HslU binding. Its function is as follows. Protease subunit of a proteasome-like degradation complex believed to be a general protein degrading machinery. The polypeptide is ATP-dependent protease subunit HslV (Ehrlichia canis (strain Jake)).